The primary structure comprises 117 residues: Small ribosomal subunit protein bS6 (117 aa).

Residues 96–117 form a disordered region; sequence HAEGPSVQMQKRDERDSRRERR. Over residues 105–117 the composition is skewed to basic and acidic residues; sequence QKRDERDSRRERR.

It belongs to the bacterial ribosomal protein bS6 family.

Its function is as follows. Binds together with bS18 to 16S ribosomal RNA. The sequence is that of Small ribosomal subunit protein bS6 from Ruegeria pomeroyi (strain ATCC 700808 / DSM 15171 / DSS-3) (Silicibacter pomeroyi).